Here is an 83-residue protein sequence, read N- to C-terminus: UPF0512 protein W (83 aa).

It belongs to the UPF0512 family.

The protein is UPF0512 protein W of Dictyostelium discoideum (Social amoeba).